The following is a 119-amino-acid chain: Hydrogenase maturation factor HypA (119 aa).

His2 is a binding site for Ni(2+). Zn(2+)-binding residues include Cys73, Cys76, Cys89, and Cys92.

This sequence belongs to the HypA/HybF family.

Functionally, involved in the maturation of [NiFe] hydrogenases. Required for nickel insertion into the metal center of the hydrogenase. The polypeptide is Hydrogenase maturation factor HypA (Cupriavidus necator (strain ATCC 17699 / DSM 428 / KCTC 22496 / NCIMB 10442 / H16 / Stanier 337) (Ralstonia eutropha)).